The chain runs to 364 residues: Aminomethyltransferase (364 aa).

It belongs to the GcvT family. The glycine cleavage system is composed of four proteins: P, T, L and H.

It carries out the reaction N(6)-[(R)-S(8)-aminomethyldihydrolipoyl]-L-lysyl-[protein] + (6S)-5,6,7,8-tetrahydrofolate = N(6)-[(R)-dihydrolipoyl]-L-lysyl-[protein] + (6R)-5,10-methylene-5,6,7,8-tetrahydrofolate + NH4(+). In terms of biological role, the glycine cleavage system catalyzes the degradation of glycine. The sequence is that of Aminomethyltransferase from Escherichia coli O157:H7.